The chain runs to 422 residues: Elongation factor 1-alpha (422 aa).

One can recognise a tr-type G domain in the interval 5 to 221; that stretch reads KPHMNLAVIG…NNLKVPEKPS (217 aa). A G1 region spans residues 14–21; sequence GHIDHGKS. Residue 14–21 participates in GTP binding; sequence GHIDHGKS. S21 contributes to the Mg(2+) binding site. The tract at residues 70 to 74 is G2; it reads GITID. The interval 91–94 is G3; sequence DCPG. Residues 91-95 and 146-149 each bind GTP; these read DCPGH and NKMD. Positions 146-149 are G4; it reads NKMD. The segment at 185-187 is G5; that stretch reads SAF.

It belongs to the TRAFAC class translation factor GTPase superfamily. Classic translation factor GTPase family. EF-Tu/EF-1A subfamily.

It is found in the cytoplasm. It catalyses the reaction GTP + H2O = GDP + phosphate + H(+). GTP hydrolase that promotes the GTP-dependent binding of aminoacyl-tRNA to the A-site of ribosomes during protein biosynthesis. The sequence is that of Elongation factor 1-alpha from Methanosarcina barkeri (strain Fusaro / DSM 804).